We begin with the raw amino-acid sequence, 62 residues long: UPF0337 protein XAC0100 (62 aa).

It belongs to the UPF0337 (CsbD) family.

The protein is UPF0337 protein XAC0100 of Xanthomonas axonopodis pv. citri (strain 306).